The sequence spans 405 residues: Arginine deiminase (405 aa).

Catalysis depends on Cys395, which acts as the Amidino-cysteine intermediate.

It belongs to the arginine deiminase family.

Its subcellular location is the cytoplasm. It catalyses the reaction L-arginine + H2O = L-citrulline + NH4(+). Its pathway is amino-acid degradation; L-arginine degradation via ADI pathway; carbamoyl phosphate from L-arginine: step 1/2. This is Arginine deiminase from Rhodococcus opacus (strain B4).